Consider the following 276-residue polypeptide: Pyrroline-5-carboxylate reductase (276 aa).

This sequence belongs to the pyrroline-5-carboxylate reductase family.

Its subcellular location is the cytoplasm. The enzyme catalyses L-proline + NADP(+) = (S)-1-pyrroline-5-carboxylate + NADPH + 2 H(+). The catalysed reaction is L-proline + NAD(+) = (S)-1-pyrroline-5-carboxylate + NADH + 2 H(+). The protein operates within amino-acid biosynthesis; L-proline biosynthesis; L-proline from L-glutamate 5-semialdehyde: step 1/1. This Arabidopsis thaliana (Mouse-ear cress) protein is Pyrroline-5-carboxylate reductase (PROC1).